The sequence spans 219 residues: Glutathione S-transferase U19 (219 aa).

The GST N-terminal domain maps to 3-82 (NEVILLDFWP…YIDEVWSHKN (80 aa)). Glutathione-binding positions include 13 to 14 (SM), 39 to 40 (NK), 53 to 54 (KI), and 66 to 67 (ES). A GST C-terminal domain is found at 88–208 (DPYLRAQARF…LPDPEKVTEF (121 aa)). Ser198 is subject to Phosphoserine.

This sequence belongs to the GST superfamily. Tau family.

It is found in the cytoplasm. Its subcellular location is the cytosol. It carries out the reaction RX + glutathione = an S-substituted glutathione + a halide anion + H(+). Functionally, catalyzes the glutathionylation of 12-oxophytodienoate (OPDA). In vitro, possesses glutathione S-transferase activity toward 1-chloro-2,4-dinitrobenzene (CDNB) and benzyl isothiocyanate (BITC), and glutathione peroxidase activity toward cumene hydroperoxide. The chain is Glutathione S-transferase U19 (GSTU19) from Arabidopsis thaliana (Mouse-ear cress).